The sequence spans 246 residues: MPTVSMRDMLQAGVHFGHQTRYWNPKMGKYIFGARNKIHIINLEHTVPAFNEALAIVKQLGSQKKKVLFVGTKRAAQKSIKEQAERSNMPFVSHRWLGGMLTNYKTIRASIRRYRELETQSQDGTFEKLTKKEALVRTRIMEKLEKSIGGIKDMGGLPDALFIIDVEHERIAIQEANKLGIPVIGVVDTNSDPAGVDYVIPGNDDAIRAIKLYATAVADACIEGAADSASVPNKDEFVEEKAADAE.

This sequence belongs to the universal ribosomal protein uS2 family.

The sequence is that of Small ribosomal subunit protein uS2 from Saccharophagus degradans (strain 2-40 / ATCC 43961 / DSM 17024).